The primary structure comprises 206 residues: HTH-type transcriptional regulator BetI (206 aa).

An HTH tetR-type domain is found at 8-68; sequence PLRRKALVDA…ETIRSLLRDL (61 aa). A DNA-binding region (H-T-H motif) is located at residues 31–50; sequence TMSDIAREAGVSAALAHHYF.

Its pathway is amine and polyamine biosynthesis; betaine biosynthesis via choline pathway [regulation]. Functionally, repressor involved in the biosynthesis of the osmoprotectant glycine betaine. It represses transcription of the choline transporter BetT and the genes of BetAB involved in the synthesis of glycine betaine. This Agrobacterium fabrum (strain C58 / ATCC 33970) (Agrobacterium tumefaciens (strain C58)) protein is HTH-type transcriptional regulator BetI.